Consider the following 332-residue polypeptide: L-lactate dehydrogenase A chain (332 aa).

Residues Gly-29–Lys-57 and Arg-99 each bind NAD(+). Arg-106, Asn-138, and Arg-169 together coordinate substrate. Asn-138 contacts NAD(+). His-193 acts as the Proton acceptor in catalysis. Thr-248 provides a ligand contact to substrate.

Belongs to the LDH/MDH superfamily. LDH family. Homotetramer.

Its subcellular location is the cytoplasm. It carries out the reaction (S)-lactate + NAD(+) = pyruvate + NADH + H(+). The protein operates within fermentation; pyruvate fermentation to lactate; (S)-lactate from pyruvate: step 1/1. In terms of biological role, interconverts simultaneously and stereospecifically pyruvate and lactate with concomitant interconversion of NADH and NAD(+). This is L-lactate dehydrogenase A chain (ldha) from Eleginops maclovinus (Patagonian blennie).